Consider the following 301-residue polypeptide: Protoheme IX farnesyltransferase (301 aa).

Helical transmembrane passes span 20–42 (FTEL…GMWL), 55–75 (VDVI…SGAF), 105–125 (ALMV…MTTW), 126–146 (QAGV…SLYA), 150–172 (LVSN…WFAV), 176–198 (FSIV…FYAI), 227–247 (MFFW…LGLV), 249–269 (VILA…GFKM), and 280–300 (FVYS…ISIF).

The protein belongs to the UbiA prenyltransferase family. Protoheme IX farnesyltransferase subfamily. Interacts with CtaA.

It localises to the cell membrane. The enzyme catalyses heme b + (2E,6E)-farnesyl diphosphate + H2O = Fe(II)-heme o + diphosphate. It participates in porphyrin-containing compound metabolism; heme O biosynthesis; heme O from protoheme: step 1/1. Functionally, converts heme B (protoheme IX) to heme O by substitution of the vinyl group on carbon 2 of heme B porphyrin ring with a hydroxyethyl farnesyl side group. This chain is Protoheme IX farnesyltransferase, found in Listeria innocua serovar 6a (strain ATCC BAA-680 / CLIP 11262).